Here is a 297-residue protein sequence, read N- to C-terminus: Phosphoribosylaminoimidazole-succinocarboxamide synthase (297 aa).

The protein belongs to the SAICAR synthetase family.

The catalysed reaction is 5-amino-1-(5-phospho-D-ribosyl)imidazole-4-carboxylate + L-aspartate + ATP = (2S)-2-[5-amino-1-(5-phospho-beta-D-ribosyl)imidazole-4-carboxamido]succinate + ADP + phosphate + 2 H(+). It functions in the pathway purine metabolism; IMP biosynthesis via de novo pathway; 5-amino-1-(5-phospho-D-ribosyl)imidazole-4-carboxamide from 5-amino-1-(5-phospho-D-ribosyl)imidazole-4-carboxylate: step 1/2. The protein is Phosphoribosylaminoimidazole-succinocarboxamide synthase of Corynebacterium glutamicum (strain ATCC 13032 / DSM 20300 / JCM 1318 / BCRC 11384 / CCUG 27702 / LMG 3730 / NBRC 12168 / NCIMB 10025 / NRRL B-2784 / 534).